Reading from the N-terminus, the 259-residue chain is Hydroxyethylthiazole kinase (259 aa).

Methionine 38 contributes to the substrate binding site. Arginine 113 and serine 158 together coordinate ATP. Residue glycine 185 coordinates substrate.

It belongs to the Thz kinase family. Mg(2+) is required as a cofactor.

It carries out the reaction 5-(2-hydroxyethyl)-4-methylthiazole + ATP = 4-methyl-5-(2-phosphooxyethyl)-thiazole + ADP + H(+). Its pathway is cofactor biosynthesis; thiamine diphosphate biosynthesis; 4-methyl-5-(2-phosphoethyl)-thiazole from 5-(2-hydroxyethyl)-4-methylthiazole: step 1/1. In terms of biological role, catalyzes the phosphorylation of the hydroxyl group of 4-methyl-5-beta-hydroxyethylthiazole (THZ). The chain is Hydroxyethylthiazole kinase from Leuconostoc citreum (strain KM20).